Here is a 333-residue protein sequence, read N- to C-terminus: Glyceraldehyde-3-phosphate dehydrogenase 1 (333 aa).

NAD(+)-binding positions include 12–13 (RI), D35, and R79. D-glyceraldehyde 3-phosphate contacts are provided by residues 152 to 154 (SCT), T183, R198, 211 to 212 (SG), and R234. Catalysis depends on C153, which acts as the Nucleophile. N314 is an NAD(+) binding site.

The protein belongs to the glyceraldehyde-3-phosphate dehydrogenase family. Homotetramer.

The protein resides in the cytoplasm. It carries out the reaction D-glyceraldehyde 3-phosphate + phosphate + NAD(+) = (2R)-3-phospho-glyceroyl phosphate + NADH + H(+). It functions in the pathway carbohydrate degradation; glycolysis; pyruvate from D-glyceraldehyde 3-phosphate: step 1/5. Resistant to pentalenolactone (PL). Its function is as follows. Catalyzes the oxidative phosphorylation of glyceraldehyde 3-phosphate (G3P) to 1,3-bisphosphoglycerate (BPG) using the cofactor NAD. The first reaction step involves the formation of a hemiacetal intermediate between G3P and a cysteine residue, and this hemiacetal intermediate is then oxidized to a thioester, with concomitant reduction of NAD to NADH. The reduced NADH is then exchanged with the second NAD, and the thioester is attacked by a nucleophilic inorganic phosphate to produce BPG. The sequence is that of Glyceraldehyde-3-phosphate dehydrogenase 1 (gap1) from Streptomyces arenae.